Reading from the N-terminus, the 156-residue chain is Transcriptional repressor NrdR (156 aa).

The segment at 3 to 34 is a zinc-finger region; that stretch reads CPFCGNVDTQVKDSRPAEDHVAIRRRRFCPAC. One can recognise an ATP-cone domain in the interval 49–139; sequence LVVIKSNGKR…VYKNFQATGD (91 aa).

Belongs to the NrdR family. Requires Zn(2+) as cofactor.

In terms of biological role, negatively regulates transcription of bacterial ribonucleotide reductase nrd genes and operons by binding to NrdR-boxes. The polypeptide is Transcriptional repressor NrdR (Jannaschia sp. (strain CCS1)).